We begin with the raw amino-acid sequence, 156 residues long: ATP synthase subunit b (156 aa).

A helical transmembrane segment spans residues 13–33 (AFIIFVWCCMKFVWPPLMAAI).

It belongs to the ATPase B chain family. In terms of assembly, F-type ATPases have 2 components, F(1) - the catalytic core - and F(0) - the membrane proton channel. F(1) has five subunits: alpha(3), beta(3), gamma(1), delta(1), epsilon(1). F(0) has three main subunits: a(1), b(2) and c(10-14). The alpha and beta chains form an alternating ring which encloses part of the gamma chain. F(1) is attached to F(0) by a central stalk formed by the gamma and epsilon chains, while a peripheral stalk is formed by the delta and b chains.

It localises to the cell inner membrane. F(1)F(0) ATP synthase produces ATP from ADP in the presence of a proton or sodium gradient. F-type ATPases consist of two structural domains, F(1) containing the extramembraneous catalytic core and F(0) containing the membrane proton channel, linked together by a central stalk and a peripheral stalk. During catalysis, ATP synthesis in the catalytic domain of F(1) is coupled via a rotary mechanism of the central stalk subunits to proton translocation. Functionally, component of the F(0) channel, it forms part of the peripheral stalk, linking F(1) to F(0). The protein is ATP synthase subunit b of Aeromonas salmonicida (strain A449).